Consider the following 435-residue polypeptide: Eukaryotic translation initiation factor 3 subunit E (435 aa).

A PCI domain is found at 219 to 392; it reads FFNHAKGRDL…GHVVMGTQPL (174 aa).

It belongs to the eIF-3 subunit E family. In terms of assembly, component of the eukaryotic translation initiation factor 3 (eIF-3) complex.

The protein localises to the cytoplasm. In terms of biological role, component of the eukaryotic translation initiation factor 3 (eIF-3) complex, which is involved in protein synthesis of a specialized repertoire of mRNAs and, together with other initiation factors, stimulates binding of mRNA and methionyl-tRNAi to the 40S ribosome. The eIF-3 complex specifically targets and initiates translation of a subset of mRNAs involved in cell proliferation. The protein is Eukaryotic translation initiation factor 3 subunit E (eIF3-S6) of Aedes aegypti (Yellowfever mosquito).